Consider the following 993-residue polypeptide: UPF0182 protein MAP_3291c (993 aa).

The next 7 helical transmembrane spans lie at 18 to 38 (ILIL…RLID), 63 to 83 (FVVF…GLAV), 113 to 133 (LVSV…AQSY), 175 to 195 (FVAV…FGGI), 210 to 230 (IQLV…YWLD), 254 to 274 (AVLP…AAVF), and 287 to 307 (IGLV…PLIV). The interval 903–941 (NIQPTEGGAPAASPPANAPAPAVTPGSAPPVAAPPVPDG) is disordered. Positions 929 to 939 (SAPPVAAPPVP) are enriched in pro residues.

The protein belongs to the UPF0182 family.

The protein resides in the cell membrane. The protein is UPF0182 protein MAP_3291c of Mycolicibacterium paratuberculosis (strain ATCC BAA-968 / K-10) (Mycobacterium paratuberculosis).